Here is a 465-residue protein sequence, read N- to C-terminus: Cysteine--tRNA ligase (465 aa).

Cys-28 is a binding site for Zn(2+). A 'HIGH' region motif is present at residues 30-40 (PTVYNYIHIGN). Positions 208, 233, and 237 each coordinate Zn(2+). The 'KMSKS' region motif lies at 265–269 (KMSKS). Residue Lys-268 participates in ATP binding.

The protein belongs to the class-I aminoacyl-tRNA synthetase family. As to quaternary structure, monomer. The cofactor is Zn(2+).

The protein localises to the cytoplasm. It carries out the reaction tRNA(Cys) + L-cysteine + ATP = L-cysteinyl-tRNA(Cys) + AMP + diphosphate. The chain is Cysteine--tRNA ligase from Exiguobacterium sibiricum (strain DSM 17290 / CCUG 55495 / CIP 109462 / JCM 13490 / 255-15).